The sequence spans 150 residues: Sulfur-rich protein, serovar D (150 aa).

A run of 2 helical transmembrane segments spans residues valine 41 to alanine 61 and alanine 67 to leucine 87.

Its subcellular location is the membrane. This is Sulfur-rich protein, serovar D (srp) from Chlamydia trachomatis serovar D (strain ATCC VR-885 / DSM 19411 / UW-3/Cx).